The following is a 292-amino-acid chain: UPF0725 protein At4g28920 (292 aa).

A compositionally biased stretch (acidic residues) spans 1-17 (MSENDSSESDIEMDPEE). Residues 1-24 (MSENDSSESDIEMDPEEEKVYRRQ) are disordered.

This sequence belongs to the UPF0725 (EMB2204) family.

The chain is UPF0725 protein At4g28920 from Arabidopsis thaliana (Mouse-ear cress).